We begin with the raw amino-acid sequence, 122 residues long: MIQPQTYLNVADNSGARKLMCIRILGASNRKYGNIGDIIIAVTKEAVPNMPLKKSEVVRAVIVRTCKEVRRDNGMTIRFDDNVAATTNQEGNPKGTRVFGPVARESRGYNFTKIIPLAPEVL.

It belongs to the universal ribosomal protein uL14 family. Part of the 50S ribosomal subunit.

The protein localises to the plastid. Its subcellular location is the chloroplast. In terms of biological role, binds to 23S rRNA. The chain is Large ribosomal subunit protein uL14c from Anthoceros angustus (Hornwort).